We begin with the raw amino-acid sequence, 284 residues long: tRNA uridine(34) hydroxylase (284 aa).

One can recognise a Rhodanese domain in the interval 132–226 (DGRPVVMLDT…YFEEVGGAHY (95 aa)). Catalysis depends on C186, which acts as the Cysteine persulfide intermediate.

The protein belongs to the TrhO family.

The enzyme catalyses uridine(34) in tRNA + AH2 + O2 = 5-hydroxyuridine(34) in tRNA + A + H2O. Catalyzes oxygen-dependent 5-hydroxyuridine (ho5U) modification at position 34 in tRNAs. In Burkholderia vietnamiensis (strain G4 / LMG 22486) (Burkholderia cepacia (strain R1808)), this protein is tRNA uridine(34) hydroxylase.